Here is a 386-residue protein sequence, read N- to C-terminus: Succinate--CoA ligase [ADP-forming] subunit beta (386 aa).

Residues 9 to 244 (KEILRKYGVP…HDEEDPLETR (236 aa)) form the ATP-grasp domain. ATP-binding positions include K46, 53-55 (GRG), E99, C102, and E107. Residues N199 and D213 each contribute to the Mg(2+) site. Substrate is bound by residues N264 and 321 to 323 (GIM).

It belongs to the succinate/malate CoA ligase beta subunit family. Heterotetramer of two alpha and two beta subunits. The cofactor is Mg(2+).

The catalysed reaction is succinate + ATP + CoA = succinyl-CoA + ADP + phosphate. It carries out the reaction GTP + succinate + CoA = succinyl-CoA + GDP + phosphate. It participates in carbohydrate metabolism; tricarboxylic acid cycle; succinate from succinyl-CoA (ligase route): step 1/1. Functionally, succinyl-CoA synthetase functions in the citric acid cycle (TCA), coupling the hydrolysis of succinyl-CoA to the synthesis of either ATP or GTP and thus represents the only step of substrate-level phosphorylation in the TCA. The beta subunit provides nucleotide specificity of the enzyme and binds the substrate succinate, while the binding sites for coenzyme A and phosphate are found in the alpha subunit. The chain is Succinate--CoA ligase [ADP-forming] subunit beta from Rickettsia akari (strain Hartford).